The sequence spans 394 residues: Elongation factor Tu (394 aa).

The tr-type G domain occupies K10–E204. The segment at G19 to T26 is G1. G19–T26 contacts GTP. Residue T26 participates in Mg(2+) binding. The G2 stretch occupies residues G60 to N64. Residues D81–G84 form a G3 region. GTP-binding positions include D81–H85 and N136–D139. The segment at N136 to D139 is G4. The segment at S174–L176 is G5.

The protein belongs to the TRAFAC class translation factor GTPase superfamily. Classic translation factor GTPase family. EF-Tu/EF-1A subfamily. Monomer.

Its subcellular location is the cytoplasm. It catalyses the reaction GTP + H2O = GDP + phosphate + H(+). GTP hydrolase that promotes the GTP-dependent binding of aminoacyl-tRNA to the A-site of ribosomes during protein biosynthesis. This Pectobacterium atrosepticum (strain SCRI 1043 / ATCC BAA-672) (Erwinia carotovora subsp. atroseptica) protein is Elongation factor Tu.